Here is a 553-residue protein sequence, read N- to C-terminus: Thioredoxin domain-containing protein 2 (553 aa).

2 disordered regions span residues 1-37 (MDVD…DANE) and 77-442 (TEES…EETM). Over residues 99–143 (PKQDDSPKSSEETIQPKEGDIPKAPEETIQSKKEDLPKSSEKAIQ) the composition is skewed to basic and acidic residues. Tandem repeats lie at residues 113–127 (QPKE…EETI), 128–142 (QSKK…EKAI), 143–157 (QPKE…AKPI), 158–172 (QPKL…VKPS), 173–187 (QPKE…EETI), 188–202 (QSKK…EEAI), 203–217 (QPKE…AKPI), 218–232 (QPKL…VKPS), 233–247 (QPKE…EETI), 248–262 (QPKE…AKPI), 263–277 (QPKL…VKPS), 278–292 (QPKE…EEAI), 293–307 (QPKE…EEAI), 308–322 (QPKE…EEAI), 323–337 (QPKE…EEAI), 338–352 (QPKE…EETI), 353–367 (QPKK…EEAI), 368–382 (QPKE…KQAI), 383–397 (QPKE…EEAI), 398–412 (PPKE…EETI), 413–427 (QPKE…EEAT), and 428–442 (PSKE…EETM). The segment at 113–442 (QPKEGDIPKA…DILKPEEETM (330 aa)) is 22 X 15 AA approximate tandem repeat of Q-P-K-X-G-D-I-P-K-S-[PS]-E-[KE]-X-I. Residues 173-209 (QPKEGDIPKAPEETIQSKKEDLPKSSEEAIQPKEGDI) are compositionally biased toward basic and acidic residues. Positions 233–254 (QPKESDIPKSPEETIQPKEGDI) are enriched in basic and acidic residues. Composition is skewed to basic and acidic residues over residues 278–376 (QPKE…DIPK) and 385–439 (KEGD…KPEE). The residue at position 362 (S362) is a Phosphoserine. S392 carries the phosphoserine modification. The region spanning 429–553 (SKEGDILKPE…KLEAVIAELK (125 aa)) is the Thioredoxin domain. Cysteines 480 and 483 form a disulfide.

Testis-specific. Only expressed during spermiogenesis, prominently in round and elongating spermatids.

Its subcellular location is the cytoplasm. Probably plays a regulatory role in sperm development. May participate in regulation of fibrous sheath (FS) assembly by supporting the formation of disulfide bonds during sperm tail morphogenesis. May also be required to rectify incorrect disulfide pairing and generate suitable pairs between the FS constituents. Can reduce disulfide bonds in vitro in the presence of NADP and thioredoxin reductase. The chain is Thioredoxin domain-containing protein 2 (TXNDC2) from Homo sapiens (Human).